Reading from the N-terminus, the 276-residue chain is Hydroxyethylthiazole kinase (276 aa).

Positions 126 and 172 each coordinate ATP. A substrate-binding site is contributed by glycine 199.

It belongs to the Thz kinase family. Requires Mg(2+) as cofactor.

The enzyme catalyses 5-(2-hydroxyethyl)-4-methylthiazole + ATP = 4-methyl-5-(2-phosphooxyethyl)-thiazole + ADP + H(+). It participates in cofactor biosynthesis; thiamine diphosphate biosynthesis; 4-methyl-5-(2-phosphoethyl)-thiazole from 5-(2-hydroxyethyl)-4-methylthiazole: step 1/1. Its function is as follows. Catalyzes the phosphorylation of the hydroxyl group of 4-methyl-5-beta-hydroxyethylthiazole (THZ). This is Hydroxyethylthiazole kinase from Burkholderia pseudomallei (strain 1106a).